The chain runs to 265 residues: MVTMKDLLECGVHFGHQTRRWNPKMKKFIFGVRKNIYIIDLQKTLRYFRYTYNVVRDRAAEGQTMIFVGTKKQASETIKKAAISCGMPYVNHRWLGGMLTNFGTIKKSIRKLEIIKKMREEGQLDLLTKKEALMLTRKEEKLELYLGGIKEMNKLPDMMFVLDAVKEKIAIQEARRLGITVVAPLDTNCDPDVVDLPIPGNDDAIRSIHLFCNEMAAAMNEGKAALADETGVEVEPISAEEKEELIAEAVAEGEEFNFAEEGENA.

It belongs to the universal ribosomal protein uS2 family.

The chain is Small ribosomal subunit protein uS2 from Aliarcobacter butzleri (strain RM4018) (Arcobacter butzleri).